The primary structure comprises 299 residues: dTDP-4-dehydrorhamnose reductase (299 aa).

Residues 10–12, Asp30, 39–40, and 63–65 each bind NADH; these read GQV, DF, and AHT. NADPH is bound at residue 11–12; sequence QV. NADPH is bound by residues 39-40, 63-65, and Tyr102; these read DF and AHT. Position 104–105 (104–105) interacts with dTDP-beta-L-rhamnose; the sequence is TD. NADH is bound by residues Tyr128 and Lys132. Residues Tyr128 and Lys132 each coordinate NADPH. The active-site Proton donor/acceptor is Tyr128. Residue Trp153 participates in dTDP-beta-L-rhamnose binding.

Belongs to the dTDP-4-dehydrorhamnose reductase family. In terms of assembly, homodimer. Mg(2+) is required as a cofactor.

It catalyses the reaction dTDP-beta-L-rhamnose + NADP(+) = dTDP-4-dehydro-beta-L-rhamnose + NADPH + H(+). Its pathway is carbohydrate biosynthesis; dTDP-L-rhamnose biosynthesis. It functions in the pathway bacterial outer membrane biogenesis; LPS O-antigen biosynthesis. In terms of biological role, involved in the biosynthesis of the dTDP-L-rhamnose which is an important component of lipopolysaccharide (LPS). Catalyzes the reduction of dTDP-6-deoxy-L-lyxo-4-hexulose to yield dTDP-L-rhamnose. RmlD uses NADH and NADPH nearly equally well. This chain is dTDP-4-dehydrorhamnose reductase, found in Shigella flexneri.